Consider the following 122-residue polypeptide: uncharacterized protein (122 aa).

Belongs to the phage O protein family.

This is an uncharacterized protein from Escherichia coli O6:H1 (strain CFT073 / ATCC 700928 / UPEC).